The following is a 119-amino-acid chain: MFKKNDRSQSRERRHMRVRKKIFGTAERPRLSVYRSEKHIYAQLIDDIEGKTLVAASSAEKGFDGVGSNKEGAKLVGKMVAEKALEKGLKKVVFDRGGFIYHGRIKELAEGAREAGLDF.

The protein belongs to the universal ribosomal protein uL18 family. Part of the 50S ribosomal subunit; part of the 5S rRNA/L5/L18/L25 subcomplex. Contacts the 5S and 23S rRNAs.

In terms of biological role, this is one of the proteins that bind and probably mediate the attachment of the 5S RNA into the large ribosomal subunit, where it forms part of the central protuberance. This is Large ribosomal subunit protein uL18 from Clostridium botulinum (strain 657 / Type Ba4).